We begin with the raw amino-acid sequence, 204 residues long: Oocyte-specific homeobox protein 1 (204 aa).

The tract at residues Glu28–Gly73 is disordered. Composition is skewed to polar residues over residues Met37 to Ser54 and Lys62 to Ser72. Positions Phe94–Asn153 form a DNA-binding region, homeobox.

Belongs to the paired homeobox family. Obox subfamily. In terms of tissue distribution, specifically expressed in oocytes and early embryos.

It localises to the nucleus. In terms of biological role, transcription factor required for zygotic genome activation (ZGA), a critical event in early embryonic development during which the developmental control passes from maternally provided mRNAs to the expression of the zygotic genome after fertilization. Together with other Obox family members, required in early two-cell stage embryos to kick-start the major ZGA wave by facilitating RNA Polymerase II 'pre-configuration', during which RNA Polymerase II relocates from the initial one-cell stage binding targets to ZGA gene promoters and distal enhancers. Mechanistically, promotes recruitment of RNA Polymerase II from (CG-rich) non-ZGA genes to (CG-poor) ZGA genes at the two-cell stage. Binds to regulatory DNA sequences containing a 5'-ACNCCTTTAATCCCAG-3' sequence motif. Most maternal and zygotic Obox family proteins can compensate for one another. In addition to its role in ZGA, promotes embryonic stem cell pluripotency. This Mus musculus (Mouse) protein is Oocyte-specific homeobox protein 1.